We begin with the raw amino-acid sequence, 326 residues long: ATP-dependent 6-phosphofructokinase 2 (326 aa).

Residue Gly-14 participates in ATP binding. 24–28 (RAVTR) contacts ADP. ATP is bound by residues 75 to 76 (RC) and 105 to 108 (GDGS). Asp-106 lines the Mg(2+) pocket. 129 to 131 (TID) is a binding site for substrate. The active-site Proton acceptor is the Asp-131. Arg-158 contributes to the ADP binding site. Residues Arg-166 and 173 to 175 (MGR) contribute to the substrate site. ADP contacts are provided by residues 189–191 (GAE), Lys-215, and 217–219 (KNS). Residues Glu-226, Arg-250, and 256–259 (HLQR) contribute to the substrate site.

It belongs to the phosphofructokinase type A (PFKA) family. ATP-dependent PFK group I subfamily. Prokaryotic clade 'B1' sub-subfamily. As to quaternary structure, homotetramer. It depends on Mg(2+) as a cofactor.

Its subcellular location is the cytoplasm. It carries out the reaction beta-D-fructose 6-phosphate + ATP = beta-D-fructose 1,6-bisphosphate + ADP + H(+). Its pathway is carbohydrate degradation; glycolysis; D-glyceraldehyde 3-phosphate and glycerone phosphate from D-glucose: step 3/4. With respect to regulation, allosterically activated by ADP and other diphosphonucleosides, and allosterically inhibited by phosphoenolpyruvate. Functionally, catalyzes the phosphorylation of D-fructose 6-phosphate to fructose 1,6-bisphosphate by ATP, the first committing step of glycolysis. The sequence is that of ATP-dependent 6-phosphofructokinase 2 from Bacteroides thetaiotaomicron (strain ATCC 29148 / DSM 2079 / JCM 5827 / CCUG 10774 / NCTC 10582 / VPI-5482 / E50).